A 58-amino-acid polypeptide reads, in one-letter code: Small ribosomal subunit protein bS21 (58 aa).

Residues 34 to 58 form a disordered region; that stretch reads KREHYESPSVRRKKKSEAARRRKRR. The segment covering 43–58 has biased composition (basic residues); sequence VRRKKKSEAARRRKRR.

It belongs to the bacterial ribosomal protein bS21 family.

This chain is Small ribosomal subunit protein bS21, found in Caldicellulosiruptor bescii (strain ATCC BAA-1888 / DSM 6725 / KCTC 15123 / Z-1320) (Anaerocellum thermophilum).